Here is a 115-residue protein sequence, read N- to C-terminus: UPF0342 protein Bsph_0375 (115 aa).

It belongs to the UPF0342 family.

The sequence is that of UPF0342 protein Bsph_0375 from Lysinibacillus sphaericus (strain C3-41).